The chain runs to 324 residues: IDS-like terpene synthase 2 (324 aa).

Positions 77 and 81 each coordinate Mg(2+).

It belongs to the FPP/GGPP synthase family. Mg(2+) is required as a cofactor.

The catalysed reaction is (2E)-geranyl diphosphate = (E)-beta-ocimene + diphosphate. The enzyme catalyses (2E,6E)-farnesyl diphosphate = (3E,6E)-alpha-farnesene + diphosphate. It carries out the reaction (2E,6E,10E)-geranylgeranyl diphosphate = (E,E,E)-alpha-springene + diphosphate. In terms of biological role, terpene synthase that shows monoterpene synthase activity and produces (E)-beta-ocimene as a major product, using geranyl diphosphate (GPP) as substrate. Also shows sesquiterpene synthase activity as it is able to convert farnesyl diphosphate (FPP) into (E,E)-alpha-farnesene. Finally, TPS2 can convert geranylgeranyl diphosphate into (E,E,E)-alpha-springene. The chain is IDS-like terpene synthase 2 from Melampsora lini (Rust fungus).